A 110-amino-acid polypeptide reads, in one-letter code: uncharacterized protein (110 aa).

This sequence to M.jannaschii MJ1213 and A.aeolicus AA15.

This is an uncharacterized protein from Methanocaldococcus jannaschii (strain ATCC 43067 / DSM 2661 / JAL-1 / JCM 10045 / NBRC 100440) (Methanococcus jannaschii).